We begin with the raw amino-acid sequence, 324 residues long: Carbonic anhydrase 15 (324 aa).

The N-terminal stretch at 1–18 is a signal peptide; the sequence is MWALDFLLSFLLIQLAAQ. One can recognise an Alpha-carbonic anhydrase domain in the interval 23–293; the sequence is GTWCYDSQDP…LGGRRISASP (271 aa). Catalysis depends on H90, which acts as the Proton acceptor. Residues H122, H124, and H147 each coordinate Zn(2+). Y155 is an active-site residue. N-linked (GlcNAc...) asparagine glycans are attached at residues N184, N194, and N203. 231–232 provides a ligand contact to substrate; the sequence is TT. The interval 269–290 is disordered; it reads LHPRPLTSNFRPQQPLGGRRIS.

The protein belongs to the alpha-carbonic anhydrase family. Requires Zn(2+) as cofactor.

It is found in the secreted. It carries out the reaction hydrogencarbonate + H(+) = CO2 + H2O. Its activity is regulated as follows. Repressed by coumarins. In terms of biological role, reversible hydration of carbon dioxide. The sequence is that of Carbonic anhydrase 15 (Ca15) from Mus musculus (Mouse).